We begin with the raw amino-acid sequence, 264 residues long: S-adenosylmethionine decarboxylase proenzyme (264 aa).

Residue Ser-112 is the Schiff-base intermediate with substrate; via pyruvic acid of the active site. Ser-112 bears the Pyruvic acid (Ser); by autocatalysis mark. Catalysis depends on His-117, which acts as the Proton acceptor; for processing activity. Cys-140 acts as the Proton donor; for catalytic activity in catalysis.

It belongs to the prokaryotic AdoMetDC family. Type 2 subfamily. Heterooctamer of four alpha and four beta chains arranged as a tetramer of alpha/beta heterodimers. Pyruvate serves as cofactor. In terms of processing, is synthesized initially as an inactive proenzyme. Formation of the active enzyme involves a self-maturation process in which the active site pyruvoyl group is generated from an internal serine residue via an autocatalytic post-translational modification. Two non-identical subunits are generated from the proenzyme in this reaction, and the pyruvate is formed at the N-terminus of the alpha chain, which is derived from the carboxyl end of the proenzyme. The post-translation cleavage follows an unusual pathway, termed non-hydrolytic serinolysis, in which the side chain hydroxyl group of the serine supplies its oxygen atom to form the C-terminus of the beta chain, while the remainder of the serine residue undergoes an oxidative deamination to produce ammonia and the pyruvoyl group blocking the N-terminus of the alpha chain.

It carries out the reaction S-adenosyl-L-methionine + H(+) = S-adenosyl 3-(methylsulfanyl)propylamine + CO2. It functions in the pathway amine and polyamine biosynthesis; S-adenosylmethioninamine biosynthesis; S-adenosylmethioninamine from S-adenosyl-L-methionine: step 1/1. Its function is as follows. Catalyzes the decarboxylation of S-adenosylmethionine to S-adenosylmethioninamine (dcAdoMet), the propylamine donor required for the synthesis of the polyamines spermine and spermidine from the diamine putrescine. In Citrobacter koseri (strain ATCC BAA-895 / CDC 4225-83 / SGSC4696), this protein is S-adenosylmethionine decarboxylase proenzyme.